The chain runs to 131 residues: Small ribosomal subunit protein uS11 (131 aa).

Over residues 1-15 (MAAKTVKKTRRRKER) the composition is skewed to basic residues. The interval 1–23 (MAAKTVKKTRRRKERKNVEHGAA) is disordered.

This sequence belongs to the universal ribosomal protein uS11 family. In terms of assembly, part of the 30S ribosomal subunit. Interacts with proteins S7 and S18. Binds to IF-3.

In terms of biological role, located on the platform of the 30S subunit, it bridges several disparate RNA helices of the 16S rRNA. Forms part of the Shine-Dalgarno cleft in the 70S ribosome. This is Small ribosomal subunit protein uS11 from Clostridium beijerinckii (strain ATCC 51743 / NCIMB 8052) (Clostridium acetobutylicum).